The primary structure comprises 333 residues: Na(+)/H(+) exchange regulatory cofactor NHE-RF1 (333 aa).

In terms of domain architecture, PDZ 1 spans 13 to 93 (LCCMEKGPDG…AVRLLVVQPQ (81 aa)). Disordered regions lie at residues 90–164 (VQPQ…RAVD) and 232–333 (LAGP…FSNL). Positions 97 to 111 (QPPKTHSDPDGEAQR) are enriched in basic and acidic residues. Residues 112 to 122 (EPPAAETPAAE) show a composition bias toward low complexity. Residues 124 to 133 (SGPEERELRP) are compositionally biased toward basic and acidic residues. One can recognise a PDZ 2 domain in the interval 135 to 215 (LCRIKKGPNG…ETKLLVVGVL (81 aa)). Basic and acidic residues-rich tracts occupy residues 274–289 (SETHSEPDTQEGDKRS) and 323–333 (WSKKNELFSNL).

The protein resides in the endomembrane system. Its subcellular location is the cell projection. It is found in the filopodium. The protein localises to the ruffle. It localises to the microvillus. Functionally, scaffold protein that connects plasma membrane proteins with members of the ezrin/moesin/radixin family and thereby helps to link them to the actin cytoskeleton and to regulate their surface expression. Was first known to play a role in the regulation of the activity and subcellular location of SLC9A3. May enhance Wnt signaling. In Gallus gallus (Chicken), this protein is Na(+)/H(+) exchange regulatory cofactor NHE-RF1 (NHERF1).